Here is a 601-residue protein sequence, read N- to C-terminus: A-type ATP synthase subunit A (601 aa).

235–242 contributes to the ATP binding site; it reads GGFGTGKT.

It belongs to the ATPase alpha/beta chains family. Has multiple subunits with at least A(3), B(3), C, D, E, F, H, I and proteolipid K(x).

It localises to the cell membrane. The catalysed reaction is ATP + H2O + 4 H(+)(in) = ADP + phosphate + 5 H(+)(out). Its function is as follows. Component of the A-type ATP synthase that produces ATP from ADP in the presence of a proton gradient across the membrane. The A chain is the catalytic subunit. The polypeptide is A-type ATP synthase subunit A (Thermofilum pendens (strain DSM 2475 / Hrk 5)).